The chain runs to 744 residues: 6-phosphofructo-2-kinase/fructose-2,6-bisphosphatase (744 aa).

2 disordered regions span residues 1–23 and 213–245; these read MGSGASKNTEEDDDGSNGGGGQL and RSLSASGSFRNDSTPKAAQRNSEDSGVTVDGSP. G2 carries N-myristoyl glycine lipidation. In terms of domain architecture, CBM20 spans 17-122; it reads NGGGGQLYVS…GDARLALFRL (106 aa). Residues 213 to 232 are compositionally biased toward polar residues; sequence RSLSASGSFRNDSTPKAAQR. S220 is modified (phosphoserine; by CPK3). 2 positions are modified to phosphoserine: S276 and S295. The segment at 301–549 is 6-phosphofructo-2-kinase; the sequence is SLSASSFLID…VFFLVNTHLT (249 aa). The residue at position 303 (S303) is a Phosphoserine; by CPK3. 349 to 357 lines the ATP pocket; it reads GLPARGKTF. Residues R382 and R406 each coordinate beta-D-fructose 6-phosphate. D431 is an active-site residue. Beta-D-fructose 6-phosphate contacts are provided by T433 and R439. C460 is an active-site residue. 469–474 provides a ligand contact to ATP; the sequence is NIRLKI. Beta-D-fructose 6-phosphate is bound by residues R496 and Y500. Positions 550-744 are fructose-2,6-bisphosphatase; sequence PRPILLTRHG…VQEKRYKLMD (195 aa). R557 serves as a coordination point for beta-D-fructose 2,6-bisphosphate. H558 (tele-phosphohistidine intermediate) is an active-site residue. The beta-D-fructose 2,6-bisphosphate site is built by N564 and G570. E630 serves as the catalytic Proton donor/acceptor. Beta-D-fructose 2,6-bisphosphate contacts are provided by Y641, R655, K659, Y670, Q697, and R701. 652-655 serves as a coordination point for ATP; it reads YESR. Position 697–701 (697–701) interacts with ATP; it reads QAVLR.

The protein in the C-terminal section; belongs to the phosphoglycerate mutase family. Interacts with 14-3-3 proteins; these interactions may regulate both nitrate assimilation and sucrose/starch partitioning in leaves during the diurnal cycle. Post-translationally, phosphorylation at Ser-220 and Ser-303 by CPK3 promotes 14-3-3 proteins binding.

Its subcellular location is the membrane. It localises to the cytoplasm. The enzyme catalyses beta-D-fructose 2,6-bisphosphate + H2O = beta-D-fructose 6-phosphate + phosphate. It carries out the reaction beta-D-fructose 6-phosphate + ATP = beta-D-fructose 2,6-bisphosphate + ADP + H(+). 6-phosphofructo-2-kinase activity is activated by pyruvate. 6-phosphofructo-2-kinase activity is inhibited by PPi, phosphoenolpyruvate and 2-phosphoglycerate. Fructose-2,6-bisphosphatase activity is inhibited by pyruvate, fructose 1,6-bisphosphate and 6-phosphogluconate. Synthesis and degradation of fructose 2,6-bisphosphate. Regulates carbon partitioning between sucrose versus starch during the diurnal cycle. The chain is 6-phosphofructo-2-kinase/fructose-2,6-bisphosphatase (FKFBP) from Arabidopsis thaliana (Mouse-ear cress).